The primary structure comprises 233 residues: Orotidine 5'-phosphate decarboxylase (233 aa).

Residues D11, K34, 61–70 (DLKLHDIPNT), T117, R179, Q189, G209, and R210 contribute to the substrate site. The active-site Proton donor is K63.

This sequence belongs to the OMP decarboxylase family. Type 1 subfamily. Homodimer.

The catalysed reaction is orotidine 5'-phosphate + H(+) = UMP + CO2. It functions in the pathway pyrimidine metabolism; UMP biosynthesis via de novo pathway; UMP from orotate: step 2/2. Functionally, catalyzes the decarboxylation of orotidine 5'-monophosphate (OMP) to uridine 5'-monophosphate (UMP). The chain is Orotidine 5'-phosphate decarboxylase from Streptococcus agalactiae serotype Ia (strain ATCC 27591 / A909 / CDC SS700).